A 388-amino-acid polypeptide reads, in one-letter code: Sporulation-specific mitogen-activated protein kinase SMK1 (388 aa).

Residues Tyr-38–Leu-337 form the Protein kinase domain. Residues Leu-44–Val-52 and Lys-69 each bind ATP. Asp-166 functions as the Proton acceptor in the catalytic mechanism. A TXY motif is present at residues Thr-207–Tyr-209.

Belongs to the protein kinase superfamily. CMGC Ser/Thr protein kinase family. MAP kinase subfamily. As to quaternary structure, interacts with GSC2. Mg(2+) serves as cofactor. In terms of processing, dually phosphorylated on Thr-207 and Tyr-209, which activates the enzyme.

It catalyses the reaction L-seryl-[protein] + ATP = O-phospho-L-seryl-[protein] + ADP + H(+). The enzyme catalyses L-threonyl-[protein] + ATP = O-phospho-L-threonyl-[protein] + ADP + H(+). Its activity is regulated as follows. Activated by tyrosine and threonine phosphorylation. In terms of biological role, required for spore wall assembly. Required for proper deposition of the two outer layers of the spore wall, the chitosan and dityrosine layers. Negatively regulates GSC2, an alternate catalytic subunit of the 1,3-beta-glucan synthase (GS). Participates in a developmentally regulated signal transduction pathway that coordinates cytodifferentiation events with the transcriptional program. This Saccharomyces cerevisiae (strain ATCC 204508 / S288c) (Baker's yeast) protein is Sporulation-specific mitogen-activated protein kinase SMK1 (SMK1).